The primary structure comprises 62 residues: Large ribosomal subunit protein bL33 (62 aa).

The protein belongs to the bacterial ribosomal protein bL33 family.

This is Large ribosomal subunit protein bL33 from Bacteroides fragilis (strain ATCC 25285 / DSM 2151 / CCUG 4856 / JCM 11019 / LMG 10263 / NCTC 9343 / Onslow / VPI 2553 / EN-2).